The primary structure comprises 126 residues: Large ribosomal subunit protein bL12 (126 aa).

The protein belongs to the bacterial ribosomal protein bL12 family. Homodimer. Part of the ribosomal stalk of the 50S ribosomal subunit. Forms a multimeric L10(L12)X complex, where L10 forms an elongated spine to which 2 to 4 L12 dimers bind in a sequential fashion. Binds GTP-bound translation factors.

Its function is as follows. Forms part of the ribosomal stalk which helps the ribosome interact with GTP-bound translation factors. Is thus essential for accurate translation. The chain is Large ribosomal subunit protein bL12 from Prosthecochloris aestuarii (strain DSM 271 / SK 413).